The chain runs to 296 residues: 4-hydroxy-tetrahydrodipicolinate synthase (296 aa).

Pyruvate is bound at residue threonine 49. Residue tyrosine 137 is the Proton donor/acceptor of the active site. Catalysis depends on lysine 166, which acts as the Schiff-base intermediate with substrate. Pyruvate is bound at residue isoleucine 208.

It belongs to the DapA family. In terms of assembly, homotetramer; dimer of dimers.

The protein resides in the cytoplasm. The catalysed reaction is L-aspartate 4-semialdehyde + pyruvate = (2S,4S)-4-hydroxy-2,3,4,5-tetrahydrodipicolinate + H2O + H(+). The protein operates within amino-acid biosynthesis; L-lysine biosynthesis via DAP pathway; (S)-tetrahydrodipicolinate from L-aspartate: step 3/4. Catalyzes the condensation of (S)-aspartate-beta-semialdehyde [(S)-ASA] and pyruvate to 4-hydroxy-tetrahydrodipicolinate (HTPA). In Chlorobium chlorochromatii (strain CaD3), this protein is 4-hydroxy-tetrahydrodipicolinate synthase.